Consider the following 209-residue polypeptide: SAGA-associated factor 11 homolog 1 (209 aa).

Positions 1 to 36 are disordered; sequence MSRTIVVKNPRTSGKDEDKAQIPSQDELPSGSSGAK. The segment at 120–141 adopts an SGF11-type zinc-finger fold; that stretch reads CCCPNCERMVAAVRFAPHLQTC. Positions 156 to 166 are enriched in low complexity; it reads LTVSSRSSSTS. Residues 156–209 form a disordered region; the sequence is LTVSSRSSSTSTGGGQANEKSTDDEDWSLDSRPGKSTKNSRNKGSKKNQKNKLK. The segment covering 193–209 has biased composition (basic residues); it reads KNSRNKGSKKNQKNKLK.

Belongs to the SGF11 family. Component of some SAGA transcription coactivator-HAT complexes, at least composed of Ada2b, not/nonstop, Pcaf/Gcn5, Sgf11 and Spt3. Within the SAGA complex, Sgf11, e(y)2, and not/nonstop form an additional subcomplex of SAGA called the DUB module (deubiquitination module). Interacts directly with not/nonstop. Interacts with the AMEX complex component xmas-2. Interacts with Cbp80; important for promoter recruitment of Sgf11 that is not associated with the DUB module.

Its subcellular location is the nucleus. The protein resides in the nucleoplasm. The protein localises to the cytoplasm. Functionally, component of the transcription regulatory histone acetylation (HAT) complex SAGA, a multiprotein complex that activates transcription by remodeling chromatin and mediating histone acetylation and deubiquitination. Within the SAGA complex, participates in a subcomplex that specifically deubiquitinates histone H2B. The SAGA complex is recruited to specific gene promoters by activators, where it is required for transcription. Required for nuclear receptor-mediated transactivation. Binds independently on SAGA to promoters in an RNA-dependent manner. Binds to mRNA and is essential for total mRNA export from the nucleus. Required to counteract heterochromatin silencing. Controls the development of neuronal connectivity in visual system by being required for accurate axon targeting in the optic lobe. Required for expression of ecdysone-induced genes such as br/broad. The sequence is that of SAGA-associated factor 11 homolog 1 from Drosophila willistoni (Fruit fly).